A 64-amino-acid chain; its full sequence is uncharacterized protein (64 aa).

This is an uncharacterized protein from Sulfolobus islandicus filamentous virus (isolate Iceland/Hveragerdi) (SIFV).